Here is a 423-residue protein sequence, read N- to C-terminus: MRSPQALLQGDPEIAGLINKELERQQSHLELIASENFASPAVMAAQGSVLTNKYAEGLPNRRYYGGCEHVDAIEELAIERAKQLFGAAWANVQPHSGAQANFAVFLALLKPGDTILGMDLSHGGHLTHGSPVNVSGKWFKAVHYGVDPETQQLNLESIRQLALEHKPKLIVCGYSAYPRSIDFAGFRAIADEVGAYLLADMAHIAGLVAAGVHPSPVPHCHVVTTTTHKTLRGPRGGLILCNDADFAKQFDKAVFPGTQGGPLEHVVAAKAVAFGEALQPSFKQYSQQVVANAQALAERLQERGIAVVSGGTDNHVVLLDLRGIGMTGKVADLLVSEVNITANKNTVPFDPESPFVTSGLRLGTAALTTRGFDEAAFSEVADVIADRLLNPEDAAIEQRCRDRVASLCQRHPLYGPASPVLAA.

(6S)-5,6,7,8-tetrahydrofolate contacts are provided by residues Leu-120 and 124–126 (GHL). Lys-229 carries the post-translational modification N6-(pyridoxal phosphate)lysine. 353 to 355 (SPF) contributes to the (6S)-5,6,7,8-tetrahydrofolate binding site.

It belongs to the SHMT family. In terms of assembly, homodimer. Requires pyridoxal 5'-phosphate as cofactor.

The protein localises to the cytoplasm. The catalysed reaction is (6R)-5,10-methylene-5,6,7,8-tetrahydrofolate + glycine + H2O = (6S)-5,6,7,8-tetrahydrofolate + L-serine. Its pathway is one-carbon metabolism; tetrahydrofolate interconversion. It participates in amino-acid biosynthesis; glycine biosynthesis; glycine from L-serine: step 1/1. Its function is as follows. Catalyzes the reversible interconversion of serine and glycine with tetrahydrofolate (THF) serving as the one-carbon carrier. This reaction serves as the major source of one-carbon groups required for the biosynthesis of purines, thymidylate, methionine, and other important biomolecules. Also exhibits THF-independent aldolase activity toward beta-hydroxyamino acids, producing glycine and aldehydes, via a retro-aldol mechanism. The chain is Serine hydroxymethyltransferase from Synechococcus sp. (strain RCC307).